The primary structure comprises 432 residues: Adenylosuccinate synthetase (432 aa).

GTP contacts are provided by residues 13-19 (GDEGKGK) and 41-43 (GHT). The active-site Proton acceptor is Asp14. Mg(2+)-binding residues include Asp14 and Gly41. Residues 14–17 (DEGK), 39–42 (NAGH), Thr130, Arg144, Gln225, Thr240, and Arg304 contribute to the IMP site. Catalysis depends on His42, which acts as the Proton donor. A substrate-binding site is contributed by 300–306 (ATTGRSR). GTP contacts are provided by residues Arg306, 332–334 (KLD), and 415–417 (STG).

This sequence belongs to the adenylosuccinate synthetase family. In terms of assembly, homodimer. Requires Mg(2+) as cofactor.

The protein resides in the cytoplasm. It carries out the reaction IMP + L-aspartate + GTP = N(6)-(1,2-dicarboxyethyl)-AMP + GDP + phosphate + 2 H(+). It functions in the pathway purine metabolism; AMP biosynthesis via de novo pathway; AMP from IMP: step 1/2. Functionally, plays an important role in the de novo pathway of purine nucleotide biosynthesis. Catalyzes the first committed step in the biosynthesis of AMP from IMP. The protein is Adenylosuccinate synthetase of Marinomonas sp. (strain MWYL1).